The chain runs to 306 residues: Bifunctional protein FolD (306 aa).

Residues 166–168 (GRS) and Ile232 contribute to the NADP(+) site.

It belongs to the tetrahydrofolate dehydrogenase/cyclohydrolase family. In terms of assembly, homodimer.

The enzyme catalyses (6R)-5,10-methylene-5,6,7,8-tetrahydrofolate + NADP(+) = (6R)-5,10-methenyltetrahydrofolate + NADPH. It carries out the reaction (6R)-5,10-methenyltetrahydrofolate + H2O = (6R)-10-formyltetrahydrofolate + H(+). It functions in the pathway one-carbon metabolism; tetrahydrofolate interconversion. Catalyzes the oxidation of 5,10-methylenetetrahydrofolate to 5,10-methenyltetrahydrofolate and then the hydrolysis of 5,10-methenyltetrahydrofolate to 10-formyltetrahydrofolate. In Methylorubrum extorquens (strain CM4 / NCIMB 13688) (Methylobacterium extorquens), this protein is Bifunctional protein FolD.